Here is a 33-residue protein sequence, read N- to C-terminus: Helofensin-1 (33 aa).

The protein belongs to the beta-defensin family. Helofensin subfamily. In terms of tissue distribution, expressed by the venom gland.

It localises to the secreted. Lethal toxin which possesses an inhibitory effect on direct electrical stimulation of the isolated hemi-diaphragm. Neither hemorrhagic nor hemolytic activities are detected. Phospholipase A2 activity, proteolytic activity and arginine esterolytic activity are absent. This is Helofensin-1 from Heloderma horridum horridum (Mexican beaded lizard).